Consider the following 458-residue polypeptide: Brassinosteroid-related acyltransferase 1 (458 aa).

Histidine 164 functions as the Proton acceptor in the catalytic mechanism.

This sequence belongs to the plant acyltransferase family. Highly expressed in young tissues and vascular bundles. Mostly expressed in young leaves, primary roots, flowers (including petals and sepals), and siliques.

The protein resides in the endoplasmic reticulum. It is found in the nucleus. It participates in plant hormone biosynthesis; brassinosteroid biosynthesis. Functionally, brassinosteroids (BR) acyltransferase with acyl-CoA ligase activity toward brassinolide (BL), castasterone (CS), typhasterol (TY), 6-deoxotyphasterol (6-deoxoTY), and 6-deoxocastasterone (6-deoxoCS) and thus converts them to corresponding lauroyl esters. Regulates BR homeostasis and promotes BR-mediated cell growth regulation. Involved in vascular bundle development. This is Brassinosteroid-related acyltransferase 1 from Arabidopsis thaliana (Mouse-ear cress).